We begin with the raw amino-acid sequence, 139 residues long: Nucleoside diphosphate kinase (139 aa).

The ATP site is built by Lys-11, Phe-59, Arg-87, Thr-93, Arg-104, and Asn-114. The active-site Pros-phosphohistidine intermediate is the His-117.

The protein belongs to the NDK family. As to quaternary structure, homotetramer. Mg(2+) is required as a cofactor.

The protein localises to the cytoplasm. The enzyme catalyses a 2'-deoxyribonucleoside 5'-diphosphate + ATP = a 2'-deoxyribonucleoside 5'-triphosphate + ADP. The catalysed reaction is a ribonucleoside 5'-diphosphate + ATP = a ribonucleoside 5'-triphosphate + ADP. In terms of biological role, major role in the synthesis of nucleoside triphosphates other than ATP. The ATP gamma phosphate is transferred to the NDP beta phosphate via a ping-pong mechanism, using a phosphorylated active-site intermediate. The sequence is that of Nucleoside diphosphate kinase from Wolbachia pipientis wMel.